Here is a 1377-residue protein sequence, read N- to C-terminus: DNA-directed RNA polymerase subunit beta (1377 aa).

Belongs to the RNA polymerase beta chain family. As to quaternary structure, the RNAP catalytic core consists of 2 alpha, 1 beta, 1 beta' and 1 omega subunit. When a sigma factor is associated with the core the holoenzyme is formed, which can initiate transcription.

The catalysed reaction is RNA(n) + a ribonucleoside 5'-triphosphate = RNA(n+1) + diphosphate. In terms of biological role, DNA-dependent RNA polymerase catalyzes the transcription of DNA into RNA using the four ribonucleoside triphosphates as substrates. This chain is DNA-directed RNA polymerase subunit beta, found in Brucella abortus (strain S19).